Reading from the N-terminus, the 1400-residue chain is DNA-directed RNA polymerase subunit beta' (1400 aa).

4 residues coordinate Zn(2+): cysteine 71, cysteine 73, cysteine 86, and cysteine 89. Mg(2+)-binding residues include aspartate 462, aspartate 464, and aspartate 466. The Zn(2+) site is built by cysteine 811, cysteine 885, cysteine 892, and cysteine 895.

The protein belongs to the RNA polymerase beta' chain family. The RNAP catalytic core consists of 2 alpha, 1 beta, 1 beta' and 1 omega subunit. When a sigma factor is associated with the core the holoenzyme is formed, which can initiate transcription. Requires Mg(2+) as cofactor. Zn(2+) is required as a cofactor.

The catalysed reaction is RNA(n) + a ribonucleoside 5'-triphosphate = RNA(n+1) + diphosphate. DNA-dependent RNA polymerase catalyzes the transcription of DNA into RNA using the four ribonucleoside triphosphates as substrates. This is DNA-directed RNA polymerase subunit beta' from Brucella anthropi (strain ATCC 49188 / DSM 6882 / CCUG 24695 / JCM 21032 / LMG 3331 / NBRC 15819 / NCTC 12168 / Alc 37) (Ochrobactrum anthropi).